Consider the following 148-residue polypeptide: Lysozyme C (148 aa).

The signal sequence occupies residues Met-1 to Gly-18. A C-type lysozyme domain is found at Lys-19–Val-148. Cystine bridges form between Cys-24/Cys-146, Cys-48/Cys-134, Cys-83/Cys-99, and Cys-95/Cys-113. Residues Glu-53 and Asp-71 contribute to the active site.

It belongs to the glycosyl hydrolase 22 family. Monomer.

Its subcellular location is the secreted. The catalysed reaction is Hydrolysis of (1-&gt;4)-beta-linkages between N-acetylmuramic acid and N-acetyl-D-glucosamine residues in a peptidoglycan and between N-acetyl-D-glucosamine residues in chitodextrins.. Lysozymes have primarily a bacteriolytic function; those in tissues and body fluids are associated with the monocyte-macrophage system and enhance the activity of immunoagents. The polypeptide is Lysozyme C (LYZ) (Miopithecus talapoin (Angolan talapoin)).